Here is a 459-residue protein sequence, read N- to C-terminus: uncharacterized protein (459 aa).

Residues 28–47 are disordered; it reads AHDEELTGPPQKPAYAAKPA. In terms of domain architecture, FAD-binding PCMH-type spans 35–214; the sequence is GPPQKPAYAA…TEVIVKLHPR (180 aa).

It belongs to the oxygen-dependent FAD-linked oxidoreductase family. Requires FAD as cofactor.

This is an uncharacterized protein from Mycobacterium tuberculosis (strain CDC 1551 / Oshkosh).